The primary structure comprises 403 residues: tRNA pseudouridine synthase D (403 aa).

Residues 1-10 show a composition bias toward basic and acidic residues; the sequence is MTVQVQDHDI. The tract at residues 1–24 is disordered; the sequence is MTVQVQDHDITTAADTAKLPQPMQ. Asp92 (nucleophile) is an active-site residue. In terms of domain architecture, TRUD spans 192 to 354; the sequence is GVPNYFGPQR…IKAQRRALRL (163 aa). The disordered stretch occupies residues 217 to 240; it reads ARPVPESRPQPNKGKRKRVPREQN.

This sequence belongs to the pseudouridine synthase TruD family.

The catalysed reaction is uridine(13) in tRNA = pseudouridine(13) in tRNA. Functionally, responsible for synthesis of pseudouridine from uracil-13 in transfer RNAs. The polypeptide is tRNA pseudouridine synthase D (Psychrobacter arcticus (strain DSM 17307 / VKM B-2377 / 273-4)).